Here is a 332-residue protein sequence, read N- to C-terminus: 2,7-dihydroxy-5-methyl-1-naphthoate 7-O-methyltransferase (332 aa).

R11 lines the substrate pocket. S-adenosyl-L-methionine is bound by residues W133, H153, D175–G179, G177, D200, S227–F228, and S242–A243. Catalysis depends on H246, which acts as the Proton acceptor. Residue D247 participates in substrate binding.

The protein belongs to the class I-like SAM-binding methyltransferase superfamily. Cation-independent O-methyltransferase family.

It catalyses the reaction 2,7-dihydroxy-5-methyl-1-naphthoate + S-adenosyl-L-methionine = 2-hydroxy-7-methoxy-5-methyl-1-naphthoate + S-adenosyl-L-homocysteine + H(+). It participates in antibiotic biosynthesis. Functionally, S-adenosyl-L-methionine-dependent O-methyltransferase that catalyzes regiospecific methylation at the 7-hydroxy group of 2,7-dihydroxy-5-methyl-1-naphthoate in the biosynthesis of the naphthoate moiety of the neocarzinostatin chromophore. Also recognizes other dihydroxynaphthoate as substrates and catalyzes their regiospecific O-methylation. The carboxylate and its ortho-hydroxy groups of the substrate appear to be crucial for NcsB1 substrate recognition and binding, and O-methylation takes place only at the free hydroxy group of these dihydroxynaphthoic acids. The chain is 2,7-dihydroxy-5-methyl-1-naphthoate 7-O-methyltransferase from Streptomyces carzinostaticus.